A 240-amino-acid chain; its full sequence is Octanoyltransferase (240 aa).

One can recognise a BPL/LPL catalytic domain in the interval 49–233 (HQAEELVWLL…AFESVFGATR (185 aa)). Residues 87–94 (RGGQVTYH), 162–164 (AIG), and 175–177 (GIA) contribute to the substrate site. Catalysis depends on C193, which acts as the Acyl-thioester intermediate.

Belongs to the LipB family.

It localises to the cytoplasm. The enzyme catalyses octanoyl-[ACP] + L-lysyl-[protein] = N(6)-octanoyl-L-lysyl-[protein] + holo-[ACP] + H(+). Its pathway is protein modification; protein lipoylation via endogenous pathway; protein N(6)-(lipoyl)lysine from octanoyl-[acyl-carrier-protein]: step 1/2. In terms of biological role, catalyzes the transfer of endogenously produced octanoic acid from octanoyl-acyl-carrier-protein onto the lipoyl domains of lipoate-dependent enzymes. Lipoyl-ACP can also act as a substrate although octanoyl-ACP is likely to be the physiological substrate. This chain is Octanoyltransferase, found in Bradyrhizobium sp. (strain ORS 278).